A 548-amino-acid chain; its full sequence is Folylpolyglutamate synthase (548 aa).

130 to 133 (GKGS) is an ATP binding site. Mg(2+) is bound by residues serine 157, glutamate 234, and histidine 262. Residues arginine 382 and aspartate 396 each contribute to the ATP site.

This sequence belongs to the folylpolyglutamate synthase family. Requires a monovalent cation as cofactor.

The protein localises to the mitochondrion inner membrane. It is found in the mitochondrion matrix. Its subcellular location is the cytoplasm. The enzyme catalyses (6S)-5,6,7,8-tetrahydrofolyl-(gamma-L-Glu)(n) + L-glutamate + ATP = (6S)-5,6,7,8-tetrahydrofolyl-(gamma-L-Glu)(n+1) + ADP + phosphate + H(+). It functions in the pathway cofactor biosynthesis; tetrahydrofolylpolyglutamate biosynthesis. In terms of biological role, catalyzes conversion of folates to polyglutamate derivatives allowing concentration of folate compounds in the cell and the intracellular retention of these cofactors, which are important substrates for most of the folate-dependent enzymes that are involved in one-carbon transfer reactions involved in purine, pyrimidine and amino acid synthesis. Required for methionine synthesis and maintenance of intact mitochondrial DNA. Involved in telomere maintenance. This Saccharomyces cerevisiae (strain FostersB) (Baker's yeast) protein is Folylpolyglutamate synthase.